Here is a 722-residue protein sequence, read N- to C-terminus: PAB1-binding protein 1 (722 aa).

Positions 1-10 are enriched in basic and acidic residues; the sequence is MKGNFRKRDS. The disordered stretch occupies residues 1 to 38; the sequence is MKGNFRKRDSSTNSRKGGNSDSNYTNGGVPNQNNSSMF. Over residues 11–38 the composition is skewed to polar residues; sequence STNSRKGGNSDSNYTNGGVPNQNNSSMF. In terms of domain architecture, Sm spans 51-107; the sequence is RQDYLLANSIGSDVTVTVTSGVKYTGLLVSCNLESTNGIDVVLRFPRVADSGVSDSV. S106 is modified (phosphoserine). Residue T193 is modified to Phosphothreonine. S215 is subject to Phosphoserine. Disordered stretches follow at residues 305–380, 412–488, and 683–722; these read ALKS…LSSK, SSTL…NPHT, and GSGP…SGHK. Low complexity-rich tracts occupy residues 307-316, 338-347, 356-370, and 412-421; these read KSNSKPNSNK, SSSNSNKNEN, PAAA…PQKT, and SSTLKSNSSL. K344 participates in a covalent cross-link: Glycyl lysine isopeptide (Lys-Gly) (interchain with G-Cter in ubiquitin). Residues 429–455 are compositionally biased toward polar residues; it reads TPSAKTVSPTTQISAGKSESRRSGSNI. Phosphoserine is present on S436. Over residues 456 to 471 the composition is skewed to low complexity; it reads SQGQSSTGHTTRSSTS. A compositionally biased stretch (basic residues) spans 698-722; sequence SHGHSRNYHQTSHHGHHNSSTSGHK.

This sequence belongs to the ataxin-2 family. Interacts (via C-terminus) with MKT1 (via C-terminus). Interacts with FIR1, IGO1, LSM12, PBP4 and PAB1.

The protein resides in the cytoplasm. It localises to the nucleus. It is found in the mitochondrion. Its function is as follows. Involved in pre-mRNA polyadenylation. May act to repress the ability of PAB1 to negatively regulate polyadenylation. Negative regulator of poly(A) nuclease (PAN) activity. Promotes mating-type switching in mother cells by positively regulating HO mRNA translation. Localizes MKT1 to polysomes. This chain is PAB1-binding protein 1 (PBP1), found in Saccharomyces cerevisiae (strain ATCC 204508 / S288c) (Baker's yeast).